The following is a 222-amino-acid chain: Thiopurine S-methyltransferase (222 aa).

Trp-10, Leu-45, Glu-66, and Arg-126 together coordinate S-adenosyl-L-methionine.

This sequence belongs to the class I-like SAM-binding methyltransferase superfamily. TPMT family.

Its subcellular location is the cytoplasm. It carries out the reaction S-adenosyl-L-methionine + a thiopurine = S-adenosyl-L-homocysteine + a thiopurine S-methylether.. This Shewanella piezotolerans (strain WP3 / JCM 13877) protein is Thiopurine S-methyltransferase.